The primary structure comprises 883 residues: Valine--tRNA ligase (883 aa).

The 'HIGH' region motif lies at 46 to 56; it reads PNVTGKLHLGH. The 'KMSKS' region signature appears at 520 to 524; that stretch reads KMSKS. An ATP-binding site is contributed by K523. The stretch at 809 to 883 forms a coiled coil; it reads LADLLNVEEE…RIKEMEKLIK (75 aa).

This sequence belongs to the class-I aminoacyl-tRNA synthetase family. ValS type 1 subfamily. In terms of assembly, monomer.

It is found in the cytoplasm. It carries out the reaction tRNA(Val) + L-valine + ATP = L-valyl-tRNA(Val) + AMP + diphosphate. Functionally, catalyzes the attachment of valine to tRNA(Val). As ValRS can inadvertently accommodate and process structurally similar amino acids such as threonine, to avoid such errors, it has a 'posttransfer' editing activity that hydrolyzes mischarged Thr-tRNA(Val) in a tRNA-dependent manner. The sequence is that of Valine--tRNA ligase from Streptococcus mutans serotype c (strain ATCC 700610 / UA159).